The following is a 206-amino-acid chain: Small ribosomal subunit protein uS4 (206 aa).

The 63-residue stretch at 96–158 (SRLDNVVYRM…AKKQSRIKAA (63 aa)) folds into the S4 RNA-binding domain.

Belongs to the universal ribosomal protein uS4 family. In terms of assembly, part of the 30S ribosomal subunit. Contacts protein S5. The interaction surface between S4 and S5 is involved in control of translational fidelity.

Functionally, one of the primary rRNA binding proteins, it binds directly to 16S rRNA where it nucleates assembly of the body of the 30S subunit. Its function is as follows. With S5 and S12 plays an important role in translational accuracy. The sequence is that of Small ribosomal subunit protein uS4 from Wigglesworthia glossinidia brevipalpis.